The sequence spans 288 residues: Hydroxyethylthiazole kinase (288 aa).

Position 55 (M55) interacts with substrate. The ATP site is built by N131 and S177. G204 is a substrate binding site.

It belongs to the Thz kinase family. Mg(2+) is required as a cofactor.

The enzyme catalyses 5-(2-hydroxyethyl)-4-methylthiazole + ATP = 4-methyl-5-(2-phosphooxyethyl)-thiazole + ADP + H(+). The protein operates within cofactor biosynthesis; thiamine diphosphate biosynthesis; 4-methyl-5-(2-phosphoethyl)-thiazole from 5-(2-hydroxyethyl)-4-methylthiazole: step 1/1. In terms of biological role, catalyzes the phosphorylation of the hydroxyl group of 4-methyl-5-beta-hydroxyethylthiazole (THZ). In Haloquadratum walsbyi (strain DSM 16790 / HBSQ001), this protein is Hydroxyethylthiazole kinase.